Consider the following 386-residue polypeptide: Putative 8-amino-7-oxononanoate synthase (386 aa).

Arginine 26 serves as a coordination point for substrate. 113–114 (GY) contributes to the pyridoxal 5'-phosphate binding site. Histidine 138 lines the substrate pocket. Pyridoxal 5'-phosphate is bound by residues serine 186, 211-214 (DDAH), and 240-243 (TLSK). N6-(pyridoxal phosphate)lysine is present on lysine 243. A substrate-binding site is contributed by threonine 352.

This sequence belongs to the class-II pyridoxal-phosphate-dependent aminotransferase family. BioF subfamily. In terms of assembly, homodimer. Pyridoxal 5'-phosphate serves as cofactor.

The enzyme catalyses 6-carboxyhexanoyl-[ACP] + L-alanine + H(+) = (8S)-8-amino-7-oxononanoate + holo-[ACP] + CO2. The protein operates within cofactor biosynthesis; biotin biosynthesis. In terms of biological role, catalyzes the decarboxylative condensation of pimeloyl-[acyl-carrier protein] and L-alanine to produce 8-amino-7-oxononanoate (AON), [acyl-carrier protein], and carbon dioxide. This is Putative 8-amino-7-oxononanoate synthase (bioF) from Phenylobacterium zucineum (strain HLK1).